The following is a 440-amino-acid chain: Proline--tRNA ligase (440 aa).

It belongs to the class-II aminoacyl-tRNA synthetase family. ProS type 2 subfamily. In terms of assembly, homodimer.

The protein resides in the cytoplasm. The catalysed reaction is tRNA(Pro) + L-proline + ATP = L-prolyl-tRNA(Pro) + AMP + diphosphate. Catalyzes the attachment of proline to tRNA(Pro) in a two-step reaction: proline is first activated by ATP to form Pro-AMP and then transferred to the acceptor end of tRNA(Pro). This Methylocella silvestris (strain DSM 15510 / CIP 108128 / LMG 27833 / NCIMB 13906 / BL2) protein is Proline--tRNA ligase.